A 328-amino-acid polypeptide reads, in one-letter code: Stress response kinase A (328 aa).

The Proton acceptor role is filled by Asp201. Mg(2+) is bound by residues Asn206 and Asp217. The active site involves Asp217.

It belongs to the SrkA/RdoA protein kinase family. As to quaternary structure, monomer. The cofactor is Mg(2+).

The protein resides in the cytoplasm. The enzyme catalyses L-seryl-[protein] + ATP = O-phospho-L-seryl-[protein] + ADP + H(+). It carries out the reaction L-threonyl-[protein] + ATP = O-phospho-L-threonyl-[protein] + ADP + H(+). Its function is as follows. A protein kinase that phosphorylates Ser and Thr residues. Probably acts to suppress the effects of stress linked to accumulation of reactive oxygen species. Probably involved in the extracytoplasmic stress response. The chain is Stress response kinase A from Salmonella paratyphi A (strain ATCC 9150 / SARB42).